We begin with the raw amino-acid sequence, 336 residues long: tRNA-cytidine(32) 2-sulfurtransferase (336 aa).

Residues 1–42 (MNAPDTLTGLEANAPVTEEAPAASEAERKRAHTRREQKEQYE) are disordered. The PP-loop motif signature appears at 75-80 (SGGKDS). Positions 150, 153, and 241 each coordinate [4Fe-4S] cluster. Residues 301-328 (PHGDIAFDEEPCSADSASNQTQRPSQTV) are disordered. The segment covering 315–328 (DSASNQTQRPSQTV) has biased composition (polar residues).

This sequence belongs to the TtcA family. As to quaternary structure, homodimer. It depends on Mg(2+) as a cofactor. [4Fe-4S] cluster serves as cofactor.

It is found in the cytoplasm. It catalyses the reaction cytidine(32) in tRNA + S-sulfanyl-L-cysteinyl-[cysteine desulfurase] + AH2 + ATP = 2-thiocytidine(32) in tRNA + L-cysteinyl-[cysteine desulfurase] + A + AMP + diphosphate + H(+). It participates in tRNA modification. Catalyzes the ATP-dependent 2-thiolation of cytidine in position 32 of tRNA, to form 2-thiocytidine (s(2)C32). The sulfur atoms are provided by the cysteine/cysteine desulfurase (IscS) system. The polypeptide is tRNA-cytidine(32) 2-sulfurtransferase (Paraburkholderia phymatum (strain DSM 17167 / CIP 108236 / LMG 21445 / STM815) (Burkholderia phymatum)).